A 204-amino-acid polypeptide reads, in one-letter code: Holliday junction branch migration complex subunit RuvA (204 aa).

Residues 1 to 64 are domain I; the sequence is MIGKLKGTID…EDQLKLFGFM (64 aa). A domain II region spans residues 65–143; sequence TALEREWFNL…AFAGEAINIA (79 aa). Residues 144–151 form a flexible linker region; it reads LKQELGEG. Residues 152-204 are domain III; that stretch reads VAAAPVADAVSALTNLGYSRDQAANAVAAAMKTAGDDADSAKLIRLGLKELAR.

It belongs to the RuvA family. In terms of assembly, homotetramer. Forms an RuvA(8)-RuvB(12)-Holliday junction (HJ) complex. HJ DNA is sandwiched between 2 RuvA tetramers; dsDNA enters through RuvA and exits via RuvB. An RuvB hexamer assembles on each DNA strand where it exits the tetramer. Each RuvB hexamer is contacted by two RuvA subunits (via domain III) on 2 adjacent RuvB subunits; this complex drives branch migration. In the full resolvosome a probable DNA-RuvA(4)-RuvB(12)-RuvC(2) complex forms which resolves the HJ.

Its subcellular location is the cytoplasm. In terms of biological role, the RuvA-RuvB-RuvC complex processes Holliday junction (HJ) DNA during genetic recombination and DNA repair, while the RuvA-RuvB complex plays an important role in the rescue of blocked DNA replication forks via replication fork reversal (RFR). RuvA specifically binds to HJ cruciform DNA, conferring on it an open structure. The RuvB hexamer acts as an ATP-dependent pump, pulling dsDNA into and through the RuvAB complex. HJ branch migration allows RuvC to scan DNA until it finds its consensus sequence, where it cleaves and resolves the cruciform DNA. The protein is Holliday junction branch migration complex subunit RuvA of Rhizobium leguminosarum bv. trifolii (strain WSM2304).